Reading from the N-terminus, the 321-residue chain is Zinc finger protein 524 (321 aa).

2 stretches are compositionally biased toward polar residues: residues Met-1–Ser-14 and Ala-39–Ser-48. Disordered stretches follow at residues Met-1 to Leu-80 and Val-86 to Lys-105. Positions Ser-49–Arg-59 form a DNA-binding region, a.T hook. C2H2-type zinc fingers lie at residues His-109–His-131, His-137–His-159, Phe-165–His-187, and Tyr-193–His-216. The interval Gly-248 to Asp-321 is disordered. Polar residues predominate over residues Pro-262–Ser-271. A compositionally biased stretch (gly residues) spans Thr-274–Gln-285.

It belongs to the krueppel C2H2-type zinc-finger protein family.

It localises to the nucleus. May be involved in transcriptional regulation. In Mus musculus (Mouse), this protein is Zinc finger protein 524 (Znf524).